The primary structure comprises 954 residues: Protein translocase subunit SecA (954 aa).

ATP-binding positions include Gln86, 104-108 (GEGKT), and Asp494. The interval 520–549 (LDPDNPLGSASTTSRGGGQGFGPASPKPKK) is disordered.

This sequence belongs to the SecA family. As to quaternary structure, monomer and homodimer. Part of the essential Sec protein translocation apparatus which comprises SecA, SecYEG and auxiliary proteins SecDF. Other proteins may also be involved.

The protein resides in the cell inner membrane. The protein localises to the cellular thylakoid membrane. It is found in the cytoplasm. The enzyme catalyses ATP + H2O + cellular proteinSide 1 = ADP + phosphate + cellular proteinSide 2.. Part of the Sec protein translocase complex. Interacts with the SecYEG preprotein conducting channel. Has a central role in coupling the hydrolysis of ATP to the transfer of proteins into and across the cell membrane, serving as an ATP-driven molecular motor driving the stepwise translocation of polypeptide chains across the membrane. In terms of biological role, probably participates in protein translocation into and across both the cytoplasmic and thylakoid membranes in cyanobacterial cells. This is Protein translocase subunit SecA from Synechococcus sp. (strain JA-3-3Ab) (Cyanobacteria bacterium Yellowstone A-Prime).